The primary structure comprises 216 residues: Golgi to ER traffic protein 1 (216 aa).

Residues 1 to 9 are Lumenal-facing; it reads MFDISSSNL. The chain crosses the membrane as a helical span at residues 10–29; the sequence is LISVLVVLFAKQLINAVGKA. The Cytoplasmic portion of the chain corresponds to 30–116; that stretch reads TLENIGWSAY…YISKYIGYMI (87 aa). Positions 54–105 form a coiled coil; it reads LDQKNVELAKVSKERKSISAQDQYARWTKLNRQFDKLTGEINKLKEETSASR. A helical membrane pass occupies residues 117-137; that stretch reads LVTTTLPIWFFRVWFRKAVLF. At 138–161 the chain is on the lumenal side; that stretch reads YFPTGVLPHYLEWFLALPFITTGG. The helical transmembrane segment at 162-178 threads the bilayer; sequence VGLTIWMSAVNNVVSSV. At 179-216 the chain is on the cytoplasmic side; it reads IFLVKFPFEKEVPFPSKEVGNEKTSINKEEVSGTPAAN. The segment at 193-216 is disordered; the sequence is PSKEVGNEKTSINKEEVSGTPAAN. The segment covering 197–209 has biased composition (basic and acidic residues); sequence VGNEKTSINKEEV.

The protein belongs to the WRB/GET1 family. In terms of assembly, component of the Golgi to ER traffic (GET) complex, which is composed of GET1, GET2 and GET3. Within the complex, GET1 and GET2 form a heterotetramer which is stabilized by phosphatidylinositol binding and which binds to the GET3 homodimer.

The protein localises to the endoplasmic reticulum membrane. It localises to the golgi apparatus membrane. In terms of biological role, required for the post-translational delivery of tail-anchored (TA) proteins to the endoplasmic reticulum. Together with GET2, acts as a membrane receptor for soluble GET3, which recognizes and selectively binds the transmembrane domain of TA proteins in the cytosol. The GET complex cooperates with the HDEL receptor ERD2 to mediate the ATP-dependent retrieval of resident ER proteins that contain a C-terminal H-D-E-L retention signal from the Golgi to the ER. The sequence is that of Golgi to ER traffic protein 1 from Debaryomyces hansenii (strain ATCC 36239 / CBS 767 / BCRC 21394 / JCM 1990 / NBRC 0083 / IGC 2968) (Yeast).